Reading from the N-terminus, the 241-residue chain is ATP synthase subunit a (241 aa).

6 helical membrane passes run 19-39, 80-100, 106-126, 135-155, 177-197, and 203-223; these read AVLI…AKMA, LVAA…IPGF, NINV…YEGI, FAHF…IEIV, LFLW…AYLL, and LLQT…AVAI.

It belongs to the ATPase A chain family. As to quaternary structure, F-type ATPases have 2 components, CF(1) - the catalytic core - and CF(0) - the membrane proton channel. CF(1) has five subunits: alpha(3), beta(3), gamma(1), delta(1), epsilon(1). CF(0) has three main subunits: a(1), b(2) and c(9-12). The alpha and beta chains form an alternating ring which encloses part of the gamma chain. CF(1) is attached to CF(0) by a central stalk formed by the gamma and epsilon chains, while a peripheral stalk is formed by the delta and b chains.

The protein localises to the cell inner membrane. Key component of the proton channel; it plays a direct role in the translocation of protons across the membrane. This chain is ATP synthase subunit a, found in Sulfurovum sp. (strain NBC37-1).